Here is a 317-residue protein sequence, read N- to C-terminus: Methionyl-tRNA formyltransferase (317 aa).

112–115 lines the (6S)-5,6,7,8-tetrahydrofolate pocket; it reads SLLP.

The protein belongs to the Fmt family.

The catalysed reaction is L-methionyl-tRNA(fMet) + (6R)-10-formyltetrahydrofolate = N-formyl-L-methionyl-tRNA(fMet) + (6S)-5,6,7,8-tetrahydrofolate + H(+). Its function is as follows. Attaches a formyl group to the free amino group of methionyl-tRNA(fMet). The formyl group appears to play a dual role in the initiator identity of N-formylmethionyl-tRNA by promoting its recognition by IF2 and preventing the misappropriation of this tRNA by the elongation apparatus. The sequence is that of Methionyl-tRNA formyltransferase from Histophilus somni (strain 129Pt) (Haemophilus somnus).